The chain runs to 419 residues: CinA-like protein (419 aa).

The protein belongs to the CinA family.

The polypeptide is CinA-like protein (Synechococcus sp. (strain CC9902)).